The following is a 337-amino-acid chain: Outer membrane protein U (337 aa).

An N-terminal signal peptide occupies residues 1–21 (MKKTLIALSVSAAAMATGVNA).

It belongs to the Gram-negative porin family. As to quaternary structure, homotrimer.

The protein localises to the cell outer membrane. Forms pores that allow passive diffusion of small molecules across the outer membrane. The protein is Outer membrane protein U (ompU) of Vibrio parahaemolyticus serotype O3:K6 (strain RIMD 2210633).